Here is a 66-residue protein sequence, read N- to C-terminus: Cytochrome c oxidase subunit 26, mitochondrial (66 aa).

The transit peptide at 1–8 (MFFSQVLR) directs the protein to the mitochondrion. Topologically, residues 9-27 (SSARAAPIKRYTGGRIGES) are mitochondrial matrix. The helical transmembrane segment at 28 to 64 (WVITEGRRLIPEIFQWSAVLSVCLGWPGAVYFFSKAR) threads the bilayer. At 65–66 (KA) the chain is on the mitochondrial intermembrane side.

The protein belongs to the fungal cytochrome c oxidase subunit 26 family. In terms of assembly, component of the cytochrome c oxidase (complex IV, CIV), a multisubunit enzyme composed of 12 subunits. The complex is composed of a catalytic core of 3 subunits COX1, COX2 and COX3, encoded in the mitochondrial DNA, and 9 supernumerary subunits COX4, COX5A (or COX5B), COX6, COX7, COX8, COX9, COX12, COX13 and COX26, which are encoded in the nuclear genome. The complex exists as a monomer or a dimer and forms supercomplexes (SCs) in the inner mitochondrial membrane with a dimer of ubiquinol-cytochrome c oxidoreductase (cytochrome b-c1 complex, complex III, CIII), resulting in 2 different assemblies (supercomplexes III(2)IV and III(2)IV(2)).

It is found in the mitochondrion inner membrane. Component of the cytochrome c oxidase, the last enzyme in the mitochondrial electron transport chain which drives oxidative phosphorylation. The respiratory chain contains 3 multisubunit complexes succinate dehydrogenase (complex II, CII), ubiquinol-cytochrome c oxidoreductase (cytochrome b-c1 complex, complex III, CIII) and cytochrome c oxidase (complex IV, CIV), that cooperate to transfer electrons derived from NADH and succinate to molecular oxygen, creating an electrochemical gradient over the inner membrane that drives transmembrane transport and the ATP synthase. Cytochrome c oxidase is the component of the respiratory chain that catalyzes the reduction of oxygen to water. Electrons originating from reduced cytochrome c in the intermembrane space (IMS) are transferred via the dinuclear copper A center (CU(A)) of COX2 and heme A of COX1 to the active site in COX1, a binuclear center (BNC) formed by heme A3 and copper B (CU(B)). The BNC reduces molecular oxygen to 2 water molecules using 4 electrons from cytochrome c in the IMS and 4 protons from the mitochondrial matrix. This chain is Cytochrome c oxidase subunit 26, mitochondrial (COX26), found in Saccharomyces cerevisiae (strain ATCC 204508 / S288c) (Baker's yeast).